A 183-amino-acid chain; its full sequence is Adenylate kinase (183 aa).

12-17 (GAGKGT) contacts ATP. The tract at residues 32 to 61 (STGDLLRAEVSAGSALGQEAESVMNRGELV) is NMP. AMP contacts are provided by residues T33, R38, 59–61 (ELV), 86–89 (GFPR), and Q93. Residues 127–133 (SRGRDDD) form an LID region. R128 is a binding site for ATP. AMP is bound by residues R130 and R141. G169 lines the ATP pocket.

This sequence belongs to the adenylate kinase family. As to quaternary structure, monomer.

It localises to the cytoplasm. The enzyme catalyses AMP + ATP = 2 ADP. Its pathway is purine metabolism; AMP biosynthesis via salvage pathway; AMP from ADP: step 1/1. Catalyzes the reversible transfer of the terminal phosphate group between ATP and AMP. Plays an important role in cellular energy homeostasis and in adenine nucleotide metabolism. This is Adenylate kinase from Synechococcus sp. (strain CC9311).